A 134-amino-acid chain; its full sequence is Estradiol 17-beta-dehydrogenase 8 (134 aa).

Position 38 (Ser38) interacts with substrate. Lys42 carries the N6-succinyllysine modification. The active-site Proton acceptor is the Tyr51. Residues 51–55 and 84–86 contribute to the NAD(+) site; these read YAASK and IAT. Position 55 is an N6-succinyllysine (Lys55).

It belongs to the short-chain dehydrogenases/reductases (SDR) family. In terms of assembly, heterotetramer with CBR4; contains two molecules of HSD17B8 and CBR4.

It localises to the mitochondrion matrix. It catalyses the reaction 17beta-estradiol + NAD(+) = estrone + NADH + H(+). The enzyme catalyses 17beta-estradiol + NADP(+) = estrone + NADPH + H(+). The catalysed reaction is testosterone + NAD(+) = androst-4-ene-3,17-dione + NADH + H(+). The protein operates within steroid biosynthesis; estrogen biosynthesis. Its pathway is lipid metabolism; fatty acid biosynthesis. Functionally, NAD-dependent 17-beta-hydroxysteroid dehydrogenase with highest activity towards estradiol. Has very low activity towards testosterone. The heterotetramer with CBR4 has NADH-dependent 3-ketoacyl-acyl carrier protein reductase activity, and thereby plays a role in mitochondrial fatty acid biosynthesis. Within the heterotetramer, HSD17B8 binds NADH; CBR4 binds NADPD. This chain is Estradiol 17-beta-dehydrogenase 8 (HSD17B8), found in Callithrix jacchus (White-tufted-ear marmoset).